The following is a 156-amino-acid chain: Ribosomal RNA large subunit methyltransferase H (156 aa).

S-adenosyl-L-methionine is bound by residues leucine 73, glycine 104, and 123 to 128; that span reads LSPLTL.

It belongs to the RNA methyltransferase RlmH family. Homodimer.

It is found in the cytoplasm. The catalysed reaction is pseudouridine(1915) in 23S rRNA + S-adenosyl-L-methionine = N(3)-methylpseudouridine(1915) in 23S rRNA + S-adenosyl-L-homocysteine + H(+). Functionally, specifically methylates the pseudouridine at position 1915 (m3Psi1915) in 23S rRNA. In Aliivibrio fischeri (strain ATCC 700601 / ES114) (Vibrio fischeri), this protein is Ribosomal RNA large subunit methyltransferase H.